We begin with the raw amino-acid sequence, 312 residues long: Putative ring-cleaving dioxygenase MhqO (312 aa).

VOC domains follow at residues 7–131 (GIHH…IVER) and 152–269 (GFGG…IATD). Residues H10, H217, and E265 each coordinate Fe cation.

Belongs to the extradiol ring-cleavage dioxygenase family. The cofactor is Fe(2+).

It localises to the cytoplasm. Its function is as follows. Putative ring-cleavage dioxygenase that may contribute to the degradation of aromatic compounds. The protein is Putative ring-cleaving dioxygenase MhqO (mhqO) of Bacillus subtilis (strain 168).